The sequence spans 151 residues: Arginine repressor (151 aa).

Belongs to the ArgR family.

The protein resides in the cytoplasm. It participates in amino-acid biosynthesis; L-arginine biosynthesis [regulation]. In terms of biological role, regulates arginine biosynthesis genes. The polypeptide is Arginine repressor (Clostridium novyi (strain NT)).